We begin with the raw amino-acid sequence, 347 residues long: Probable replication factor C subunit 3 (347 aa).

It belongs to the activator 1 small subunits family. As to quaternary structure, heteropentamer of various rfc subunits that forms a complex (RFC) with PCNA in the presence of ATP.

The protein localises to the nucleus. Its function is as follows. The elongation of primed DNA templates by DNA polymerase delta and epsilon requires the action of the accessory proteins PCNA and activator 1. This chain is Probable replication factor C subunit 3 (rfc3), found in Dictyostelium discoideum (Social amoeba).